A 393-amino-acid chain; its full sequence is NAD(P)H-quinone oxidoreductase subunit H, chloroplastic (393 aa).

It belongs to the complex I 49 kDa subunit family. NDH is composed of at least 16 different subunits, 5 of which are encoded in the nucleus.

It is found in the plastid. Its subcellular location is the chloroplast thylakoid membrane. It catalyses the reaction a plastoquinone + NADH + (n+1) H(+)(in) = a plastoquinol + NAD(+) + n H(+)(out). The catalysed reaction is a plastoquinone + NADPH + (n+1) H(+)(in) = a plastoquinol + NADP(+) + n H(+)(out). Its function is as follows. NDH shuttles electrons from NAD(P)H:plastoquinone, via FMN and iron-sulfur (Fe-S) centers, to quinones in the photosynthetic chain and possibly in a chloroplast respiratory chain. The immediate electron acceptor for the enzyme in this species is believed to be plastoquinone. Couples the redox reaction to proton translocation, and thus conserves the redox energy in a proton gradient. The chain is NAD(P)H-quinone oxidoreductase subunit H, chloroplastic from Liriodendron tulipifera (Tuliptree).